The sequence spans 327 residues: Type II methyltransferase M.HhaI (327 aa).

Positions 12 to 325 (LRFIDLFAGL…YNIGSSLNFK (314 aa)) constitute an SAM-dependent MTase C5-type domain. C81 is a catalytic residue.

The protein belongs to the class I-like SAM-binding methyltransferase superfamily. C5-methyltransferase family. In terms of assembly, monomer.

It carries out the reaction a 2'-deoxycytidine in DNA + S-adenosyl-L-methionine = a 5-methyl-2'-deoxycytidine in DNA + S-adenosyl-L-homocysteine + H(+). In terms of biological role, a methylase, recognizes the double-stranded sequence 5'-GCGC-3', methylates C-2 on both strands, and protects the DNA from cleavage by the HhaI endonuclease. The protein is Type II methyltransferase M.HhaI (hhaIM) of Haemophilus parahaemolyticus.